Consider the following 101-residue polypeptide: uncharacterized protein (101 aa).

A helical transmembrane segment spans residues 72 to 94 (ILCPSFLNYSFINIYCFGPYTMV).

It localises to the membrane. This is an uncharacterized protein from Schizosaccharomyces pombe (strain 972 / ATCC 24843) (Fission yeast).